A 421-amino-acid chain; its full sequence is Mitochondrial distribution and morphology protein 10 (421 aa).

This sequence belongs to the MDM10 family. Component of the ER-mitochondria encounter structure (ERMES) or MDM complex, composed of MMM1, MDM10, MDM12 and MDM34. Associates with the mitochondrial outer membrane sorting assembly machinery SAM(core) complex.

It is found in the mitochondrion outer membrane. Component of the ERMES/MDM complex, which serves as a molecular tether to connect the endoplasmic reticulum and mitochondria. Components of this complex are involved in the control of mitochondrial shape and protein biogenesis and may function in phospholipid exchange. MDM10 is involved in the late assembly steps of the general translocase of the mitochondrial outer membrane (TOM complex). Functions in the TOM40-specific route of the assembly of outer membrane beta-barrel proteins, including the association of TOM40 with the receptor TOM22 and small TOM proteins. Can associate with the SAM(core) complex as well as the MDM12-MMM1 complex, both involved in late steps of the major beta-barrel assembly pathway, that is responsible for biogenesis of all outer membrane beta-barrel proteins. May act as a switch that shuttles between both complexes and channels precursor proteins into the TOM40-specific pathway. Plays a role in mitochondrial morphology and in the inheritance of mitochondria. The polypeptide is Mitochondrial distribution and morphology protein 10 (Vanderwaltozyma polyspora (strain ATCC 22028 / DSM 70294 / BCRC 21397 / CBS 2163 / NBRC 10782 / NRRL Y-8283 / UCD 57-17) (Kluyveromyces polysporus)).